The following is a 155-amino-acid chain: Small ribosomal subunit protein uS7 (155 aa).

Belongs to the universal ribosomal protein uS7 family. As to quaternary structure, part of the 30S ribosomal subunit. Contacts proteins S9 and S11.

In terms of biological role, one of the primary rRNA binding proteins, it binds directly to 16S rRNA where it nucleates assembly of the head domain of the 30S subunit. Is located at the subunit interface close to the decoding center, probably blocks exit of the E-site tRNA. The protein is Small ribosomal subunit protein uS7 of Petrotoga mobilis (strain DSM 10674 / SJ95).